The sequence spans 118 residues: Large ribosomal subunit protein mL53 (118 aa).

Positions 99-118 (AAAASAPGADKVAPGTSTRR) are disordered.

Belongs to the mitochondrion-specific ribosomal protein mL53 family. Component of the mitochondrial ribosome large subunit (39S) which comprises a 16S rRNA and about 50 distinct proteins.

The protein localises to the mitochondrion. The protein is Large ribosomal subunit protein mL53 (Mrpl53) of Mus musculus (Mouse).